The following is a 59-amino-acid chain: MYPIQIVFSENPIDQRHLGQSGGTISFTACGLPVFHFETQEQFQAYMMLKGEAAYNEKR.

This is an uncharacterized protein from Bacillus subtilis (strain 168).